Reading from the N-terminus, the 428-residue chain is L-glutamyl-[BtrI acyl-carrier protein] decarboxylase (428 aa).

At K49 the chain carries N6-(pyridoxal phosphate)lysine. Pyridoxal 5'-phosphate-binding positions include G228, 269-272 (ESGR), and Y375. R272 and Y375 together coordinate substrate.

Belongs to the Orn/Lys/Arg decarboxylase class-II family. In terms of assembly, homodimer. It depends on pyridoxal 5'-phosphate as a cofactor.

It catalyses the reaction gamma-L-glutamyl-[BtrI ACP] + H(+) = 4-aminobutanoyl-[BtrI ACP] + CO2. It functions in the pathway antibiotic biosynthesis; butirosin biosynthesis. Its function is as follows. Pyridoxal phosphate-dependent decarboxylase that catalyzes 1 step in the biosynthesis of the side chain of the aminoglycoside antibiotics in the biosynthetic pathway of butirosin. Able to decarboxylate L-ornithine, L-arginine, L-lysine, but not L-glutamate or any D-amino acids. Has low activity with substrates not bound to an acyl-carrier protein. This chain is L-glutamyl-[BtrI acyl-carrier protein] decarboxylase (btrK), found in Niallia circulans (Bacillus circulans).